Consider the following 286-residue polypeptide: 3-methyl-2-oxobutanoate hydroxymethyltransferase (286 aa).

Aspartate 51 and aspartate 90 together coordinate Mg(2+). 3-methyl-2-oxobutanoate contacts are provided by residues 51-52, aspartate 90, and lysine 120; that span reads DS. Glutamate 122 is a binding site for Mg(2+). Glutamate 189 serves as the catalytic Proton acceptor. The disordered stretch occupies residues 263–286; sequence TFPGPSHVFSGSKASSDLNGGDES.

The protein belongs to the PanB family. As to quaternary structure, homodecamer; pentamer of dimers. It depends on Mg(2+) as a cofactor.

The protein localises to the cytoplasm. The enzyme catalyses 3-methyl-2-oxobutanoate + (6R)-5,10-methylene-5,6,7,8-tetrahydrofolate + H2O = 2-dehydropantoate + (6S)-5,6,7,8-tetrahydrofolate. The protein operates within cofactor biosynthesis; (R)-pantothenate biosynthesis; (R)-pantoate from 3-methyl-2-oxobutanoate: step 1/2. Its function is as follows. Catalyzes the reversible reaction in which hydroxymethyl group from 5,10-methylenetetrahydrofolate is transferred onto alpha-ketoisovalerate to form ketopantoate. The sequence is that of 3-methyl-2-oxobutanoate hydroxymethyltransferase from Mesorhizobium japonicum (strain LMG 29417 / CECT 9101 / MAFF 303099) (Mesorhizobium loti (strain MAFF 303099)).